The chain runs to 289 residues: 4-diphosphocytidyl-2-C-methyl-D-erythritol kinase (289 aa).

Residue Lys15 is part of the active site. An ATP-binding site is contributed by 100–110; it reads PVSAGLAGGSA. Residue Asp140 is part of the active site.

It belongs to the GHMP kinase family. IspE subfamily.

The enzyme catalyses 4-CDP-2-C-methyl-D-erythritol + ATP = 4-CDP-2-C-methyl-D-erythritol 2-phosphate + ADP + H(+). It participates in isoprenoid biosynthesis; isopentenyl diphosphate biosynthesis via DXP pathway; isopentenyl diphosphate from 1-deoxy-D-xylulose 5-phosphate: step 3/6. Catalyzes the phosphorylation of the position 2 hydroxy group of 4-diphosphocytidyl-2C-methyl-D-erythritol. This is 4-diphosphocytidyl-2-C-methyl-D-erythritol kinase from Anaplasma marginale (strain Florida).